A 244-amino-acid chain; its full sequence is Derlin-2.2 (244 aa).

The Cytoplasmic portion of the chain corresponds to Met-1–Thr-21. A helical transmembrane segment spans residues Ala-22–Leu-42. Over Asn-43–Phe-96 the chain is Lumenal. The chain crosses the membrane as a helical span at residues Leu-97–Ile-117. Over Pro-118 to Ser-121 the chain is Cytoplasmic. Residues Ala-122–Trp-142 form a helical membrane-spanning segment. Over Ser-143–Ser-152 the chain is Lumenal. A helical membrane pass occupies residues Phe-153–Ile-173. Over Leu-174 to Asp-244 the chain is Cytoplasmic.

The protein belongs to the derlin family.

The protein resides in the endoplasmic reticulum membrane. Functionally, may be involved in the degradation process of specific misfolded endoplasmic reticulum (ER) luminal proteins. This Arabidopsis thaliana (Mouse-ear cress) protein is Derlin-2.2 (DER2.2).